The chain runs to 220 residues: Deoxyribose-phosphate aldolase 2 (220 aa).

The Proton donor/acceptor role is filled by D89. The active-site Schiff-base intermediate with acetaldehyde is K151. The active-site Proton donor/acceptor is the K180.

This sequence belongs to the DeoC/FbaB aldolase family. DeoC type 1 subfamily.

Its subcellular location is the cytoplasm. The enzyme catalyses 2-deoxy-D-ribose 5-phosphate = D-glyceraldehyde 3-phosphate + acetaldehyde. The protein operates within carbohydrate degradation; 2-deoxy-D-ribose 1-phosphate degradation; D-glyceraldehyde 3-phosphate and acetaldehyde from 2-deoxy-alpha-D-ribose 1-phosphate: step 2/2. Functionally, catalyzes a reversible aldol reaction between acetaldehyde and D-glyceraldehyde 3-phosphate to generate 2-deoxy-D-ribose 5-phosphate. In Staphylococcus aureus (strain MRSA252), this protein is Deoxyribose-phosphate aldolase 2.